A 549-amino-acid polypeptide reads, in one-letter code: Arginine--tRNA ligase (549 aa).

The short motif at 113–123 is the 'HIGH' region element; the sequence is ANPDGPLHIGH.

This sequence belongs to the class-I aminoacyl-tRNA synthetase family.

The protein resides in the cytoplasm. It catalyses the reaction tRNA(Arg) + L-arginine + ATP = L-arginyl-tRNA(Arg) + AMP + diphosphate. The sequence is that of Arginine--tRNA ligase (argS) from Archaeoglobus fulgidus (strain ATCC 49558 / DSM 4304 / JCM 9628 / NBRC 100126 / VC-16).